The sequence spans 431 residues: Magnetosome protein MamH (431 aa).

11 helical membrane-spanning segments follow: residues 21 to 41 (LLSALCMVFMTLVVAIQPLFL), 57 to 77 (ANVQVVTEVLDLFIFAYLGYL), 86 to 106 (IIVAGFLVAAIGAVIAPLSPW), 107 to 127 (IGGASIGALVVYYVSRVIMSA), 156 to 176 (TAFMMAFGVTLVYAVLMQIPA), 178 to 198 (AGIAVTMLLTAAVSLAGAWLA), 243 to 263 (MVFVGLFLMLWFIYFADLIKV), 274 to 294 (ILIGLMGAVVMLSIPVWRSFI), 302 to 321 (AVLLGMVLSALGFIMLGFII), 358 to 378 (LLGSVLGAFNVIGCIGIIFFV), and 380 to 400 (VGGFLFDYVGPPAPFVFTGVG).

This sequence belongs to the major facilitator superfamily.

Its subcellular location is the magnetosome membrane. Required for correct biomineralization of the magnetosome; probably transports some form of iron. Partially functionally redundant with MamZ. The chain is Magnetosome protein MamH (mamH) from Paramagnetospirillum magneticum (strain ATCC 700264 / AMB-1) (Magnetospirillum magneticum).